Consider the following 357-residue polypeptide: UDP-3-O-acylglucosamine N-acyltransferase (357 aa).

His251 acts as the Proton acceptor in catalysis.

It belongs to the transferase hexapeptide repeat family. LpxD subfamily. Homotrimer.

It carries out the reaction a UDP-3-O-[(3R)-3-hydroxyacyl]-alpha-D-glucosamine + a (3R)-hydroxyacyl-[ACP] = a UDP-2-N,3-O-bis[(3R)-3-hydroxyacyl]-alpha-D-glucosamine + holo-[ACP] + H(+). The protein operates within bacterial outer membrane biogenesis; LPS lipid A biosynthesis. Functionally, catalyzes the N-acylation of UDP-3-O-acylglucosamine using 3-hydroxyacyl-ACP as the acyl donor. Is involved in the biosynthesis of lipid A, a phosphorylated glycolipid that anchors the lipopolysaccharide to the outer membrane of the cell. This chain is UDP-3-O-acylglucosamine N-acyltransferase, found in Ralstonia pickettii (strain 12J).